Reading from the N-terminus, the 169-residue chain is Ribosome maturation factor RimM (169 aa).

Positions 94–168 (DDEFYHADLI…RIVADPPEGL (75 aa)) constitute a PRC barrel domain.

It belongs to the RimM family. As to quaternary structure, binds ribosomal protein uS19.

Its subcellular location is the cytoplasm. Functionally, an accessory protein needed during the final step in the assembly of 30S ribosomal subunit, possibly for assembly of the head region. Essential for efficient processing of 16S rRNA. May be needed both before and after RbfA during the maturation of 16S rRNA. It has affinity for free ribosomal 30S subunits but not for 70S ribosomes. The protein is Ribosome maturation factor RimM of Cereibacter sphaeroides (strain ATCC 17029 / ATH 2.4.9) (Rhodobacter sphaeroides).